We begin with the raw amino-acid sequence, 1217 residues long: ATP-dependent helicase/nuclease subunit A (1217 aa).

In terms of domain architecture, UvrD-like helicase ATP-binding spans 10 to 475; it reads VIWTDAQWQS…IDLSQNFRSR (466 aa). 31-38 contributes to the ATP binding site; the sequence is AAAGSGKT. Positions 476 to 786 constitute a UvrD-like helicase C-terminal domain; it reads KEVLSTTNYI…RMMTIHSSKG (311 aa).

This sequence belongs to the helicase family. AddA subfamily. Heterodimer of AddA and AddB/RexB. Mg(2+) is required as a cofactor.

It carries out the reaction Couples ATP hydrolysis with the unwinding of duplex DNA by translocating in the 3'-5' direction.. The catalysed reaction is ATP + H2O = ADP + phosphate + H(+). Functionally, the heterodimer acts as both an ATP-dependent DNA helicase and an ATP-dependent, dual-direction single-stranded exonuclease. Recognizes the chi site generating a DNA molecule suitable for the initiation of homologous recombination. The AddA nuclease domain is required for chi fragment generation; this subunit has the helicase and 3' -&gt; 5' nuclease activities. This Staphylococcus aureus (strain Mu3 / ATCC 700698) protein is ATP-dependent helicase/nuclease subunit A.